Here is a 276-residue protein sequence, read N- to C-terminus: Large ribosomal subunit protein uL2 (276 aa).

2 disordered regions span residues 36-58 (PLHK…GGGH) and 214-276 (LGKR…RRKK).

This sequence belongs to the universal ribosomal protein uL2 family. Part of the 50S ribosomal subunit. Forms a bridge to the 30S subunit in the 70S ribosome.

One of the primary rRNA binding proteins. Required for association of the 30S and 50S subunits to form the 70S ribosome, for tRNA binding and peptide bond formation. It has been suggested to have peptidyltransferase activity; this is somewhat controversial. Makes several contacts with the 16S rRNA in the 70S ribosome. The chain is Large ribosomal subunit protein uL2 from Halalkalibacterium halodurans (strain ATCC BAA-125 / DSM 18197 / FERM 7344 / JCM 9153 / C-125) (Bacillus halodurans).